Consider the following 121-residue polypeptide: MDQFIQLVEASQVRNDLPDIHPGDTVKLQLKVIEGEKERLQAFEGVIISDKGMGTSKTITVRKISNGVGVERIIPLCSPNIESITVLRKGKTRRAKLSYLRKRTGKAALKVKERKVFTPSK.

This sequence belongs to the bacterial ribosomal protein bL19 family.

Functionally, this protein is located at the 30S-50S ribosomal subunit interface and may play a role in the structure and function of the aminoacyl-tRNA binding site. The chain is Large ribosomal subunit protein bL19 from Chlorobium phaeobacteroides (strain BS1).